Here is a 29-residue protein sequence, read N- to C-terminus: Trypsin inhibitor 1 (29 aa).

3 disulfide bridges follow: cysteine 3-cysteine 20, cysteine 10-cysteine 22, and cysteine 16-cysteine 28.

The protein belongs to the protease inhibitor I7 (squash-type serine protease inhibitor) family.

Its subcellular location is the secreted. Functionally, inhibits trypsin. The protein is Trypsin inhibitor 1 of Cucurbita maxima (Pumpkin).